The sequence spans 73 residues: Large ribosomal subunit protein bL31 (73 aa).

4 residues coordinate Zn(2+): cysteine 16, cysteine 18, cysteine 36, and cysteine 39.

This sequence belongs to the bacterial ribosomal protein bL31 family. Type A subfamily. Part of the 50S ribosomal subunit. It depends on Zn(2+) as a cofactor.

Functionally, binds the 23S rRNA. This Myxococcus xanthus (strain DK1622) protein is Large ribosomal subunit protein bL31.